A 369-amino-acid polypeptide reads, in one-letter code: Glutamate 5-kinase (369 aa).

K9 serves as a coordination point for ATP. Positions 49, 136, and 148 each coordinate substrate. Residues 168–169 and 210–216 each bind ATP; these read TD and TGGMLTK. Positions 275–355 constitute a PUA domain; it reads QGSIWVDKGA…KGVLIYRDDW (81 aa).

Belongs to the glutamate 5-kinase family.

Its subcellular location is the cytoplasm. It carries out the reaction L-glutamate + ATP = L-glutamyl 5-phosphate + ADP. The protein operates within amino-acid biosynthesis; L-proline biosynthesis; L-glutamate 5-semialdehyde from L-glutamate: step 1/2. In terms of biological role, catalyzes the transfer of a phosphate group to glutamate to form L-glutamate 5-phosphate. The protein is Glutamate 5-kinase of Streptococcus pneumoniae (strain 70585).